Reading from the N-terminus, the 169-residue chain is Sorting nexin-24 (169 aa).

Methionine 1 bears the N-acetylmethionine mark. Residues 1–125 form the PX domain; sequence MEVYIPSFRY…SFDETESEES (125 aa). Residues arginine 38, serine 40, lysine 61, and arginine 74 each coordinate a 1,2-diacyl-sn-glycero-3-phospho-(1D-myo-inositol-3-phosphate). A phosphoserine mark is found at serine 113 and serine 116.

The protein belongs to the sorting nexin family.

It is found in the cytoplasmic vesicle membrane. May be involved in several stages of intracellular trafficking. The chain is Sorting nexin-24 (SNX24) from Bos taurus (Bovine).